We begin with the raw amino-acid sequence, 565 residues long: Ubiquitin carboxyl-terminal hydrolase 21 (565 aa).

Residues 1–14 (MPQASEHRLGRTRE) show a composition bias toward basic and acidic residues. Disordered stretches follow at residues 1 to 103 (MPQA…LPLP), 109 to 128 (ARSKSVSSGDLRPMGIALGG), and 142 to 163 (LALRPEPPPLRRSTSLRRLGGF). Positions 42 to 57 (APGPNPMLRPLPPRPG) are enriched in pro residues. Residues 58–70 (PPEERLKKLELGR) are compositionally biased toward basic and acidic residues. Residues 71 to 82 (GRTSGPRPSGPL) show a composition bias toward low complexity. Residues 134 to 152 (ELGAALSRLALRPEPPPLR) carry the Nuclear export signal motif. In terms of domain architecture, USP spans 212–558 (VGLRNLGNTC…EGYVLFYQLM (347 aa)). The active-site Nucleophile is the C221. 4 residues coordinate Zn(2+): C384, C387, C437, and C440. The active-site Proton acceptor is the H518.

It belongs to the peptidase C19 family. USP21 subfamily. In terms of assembly, interacts with BEND3.

Its subcellular location is the cytoplasm. It localises to the nucleus. The enzyme catalyses Thiol-dependent hydrolysis of ester, thioester, amide, peptide and isopeptide bonds formed by the C-terminal Gly of ubiquitin (a 76-residue protein attached to proteins as an intracellular targeting signal).. Deubiquitinating enzyme that hydrolyzes 'Lys-6'- and 'Lys-11'-linked polyubiquitin. Also hydrolyzes heterotypic (mixed and branched) and homotypic chains. Important regulator of energy metabolism. Glucose and fatty acids trigger its nuclear translocation by CBP-dependent acetylation. In the nucleus, deubiquitinates and stabilizes the nuclear receptor PPARD regulating the expression of various genes involved in glucose and lipid metabolism and oxidative phosphorylation. Also acts as a negative regulator of the ribosome quality control (RQC) by mediating deubiquitination of 40S ribosomal proteins RPS10/eS10 and RPS20/uS10, thereby antagonizing ZNF598-mediated 40S ubiquitination. This is Ubiquitin carboxyl-terminal hydrolase 21 (USP21) from Bos taurus (Bovine).